The following is a 208-amino-acid chain: Thymidylate kinase (208 aa).

Position 11 to 18 (11 to 18) interacts with ATP; that stretch reads GTEGVGKT.

This sequence belongs to the thymidylate kinase family.

The enzyme catalyses dTMP + ATP = dTDP + ADP. In terms of biological role, phosphorylation of dTMP to form dTDP in both de novo and salvage pathways of dTTP synthesis. The polypeptide is Thymidylate kinase (Psychrobacter sp. (strain PRwf-1)).